Reading from the N-terminus, the 225-residue chain is 7-cyano-7-deazaguanine synthase (225 aa).

10 to 20 (VSGGLDSTTVI) contributes to the ATP binding site. Residues C189, C199, C202, and C205 each contribute to the Zn(2+) site.

It belongs to the QueC family. The cofactor is Zn(2+).

It carries out the reaction 7-carboxy-7-deazaguanine + NH4(+) + ATP = 7-cyano-7-deazaguanine + ADP + phosphate + H2O + H(+). The protein operates within purine metabolism; 7-cyano-7-deazaguanine biosynthesis. In terms of biological role, catalyzes the ATP-dependent conversion of 7-carboxy-7-deazaguanine (CDG) to 7-cyano-7-deazaguanine (preQ(0)). The chain is 7-cyano-7-deazaguanine synthase from Cellvibrio japonicus (strain Ueda107) (Pseudomonas fluorescens subsp. cellulosa).